We begin with the raw amino-acid sequence, 226 residues long: UPF0758 protein Spy49_0870 (226 aa).

Residues 103–225 (SVLTSVQVAE…YYSFREKSTL (123 aa)) enclose the MPN domain. Zn(2+)-binding residues include His174, His176, and Asp187. Positions 174–187 (HNHPSGNIEPSSND) match the JAMM motif motif.

The protein belongs to the UPF0758 family.

This chain is UPF0758 protein Spy49_0870, found in Streptococcus pyogenes serotype M49 (strain NZ131).